The following is a 91-amino-acid chain: Probable Fe(2+)-trafficking protein (91 aa).

It belongs to the Fe(2+)-trafficking protein family.

Functionally, could be a mediator in iron transactions between iron acquisition and iron-requiring processes, such as synthesis and/or repair of Fe-S clusters in biosynthetic enzymes. The chain is Probable Fe(2+)-trafficking protein from Polynucleobacter necessarius subsp. necessarius (strain STIR1).